The chain runs to 185 residues: Ribosome-recycling factor (185 aa).

The protein belongs to the RRF family.

Its subcellular location is the cytoplasm. Its function is as follows. Responsible for the release of ribosomes from messenger RNA at the termination of protein biosynthesis. May increase the efficiency of translation by recycling ribosomes from one round of translation to another. The sequence is that of Ribosome-recycling factor from Geotalea daltonii (strain DSM 22248 / JCM 15807 / FRC-32) (Geobacter daltonii).